The chain runs to 354 residues: Uroporphyrinogen decarboxylase (354 aa).

Substrate is bound by residues 27–31 (RQAGR), Phe46, Asp77, Tyr154, Ser209, and His327.

It belongs to the uroporphyrinogen decarboxylase family. Homodimer.

It localises to the cytoplasm. It carries out the reaction uroporphyrinogen III + 4 H(+) = coproporphyrinogen III + 4 CO2. It participates in porphyrin-containing compound metabolism; protoporphyrin-IX biosynthesis; coproporphyrinogen-III from 5-aminolevulinate: step 4/4. Functionally, catalyzes the decarboxylation of four acetate groups of uroporphyrinogen-III to yield coproporphyrinogen-III. This is Uroporphyrinogen decarboxylase from Pseudomonas syringae pv. tomato (strain ATCC BAA-871 / DC3000).